A 369-amino-acid chain; its full sequence is Histidinol-phosphate aminotransferase 3 (369 aa).

Lys220 carries the post-translational modification N6-(pyridoxal phosphate)lysine.

It belongs to the class-II pyridoxal-phosphate-dependent aminotransferase family. Histidinol-phosphate aminotransferase subfamily. In terms of assembly, homodimer. Pyridoxal 5'-phosphate serves as cofactor.

It carries out the reaction L-histidinol phosphate + 2-oxoglutarate = 3-(imidazol-4-yl)-2-oxopropyl phosphate + L-glutamate. It functions in the pathway amino-acid biosynthesis; L-histidine biosynthesis; L-histidine from 5-phospho-alpha-D-ribose 1-diphosphate: step 7/9. This Mesorhizobium japonicum (strain LMG 29417 / CECT 9101 / MAFF 303099) (Mesorhizobium loti (strain MAFF 303099)) protein is Histidinol-phosphate aminotransferase 3 (hisC3).